The sequence spans 788 residues: Pre-rRNA-processing protein TSR1 homolog (788 aa).

The segment at 1-40 (MSTTGHRAGVFKKPAKPHKSWKGKRTKGEITTENRGREGV) is disordered. Basic residues predominate over residues 9 to 25 (GVFKKPAKPHKSWKGKR). Over residues 26–40 (TKGEITTENRGREGV) the composition is skewed to basic and acidic residues. Residues 83–243 (APCLVTILSL…LRTLNETKKK (161 aa)) enclose the Bms1-type G domain. The tract at residues 354-433 (LEEADKEMRR…ASEMMFHDEI (80 aa)) is disordered. Residues 378–412 (DDSEDDEDEEDEDEDMDDEEEDKDLEEDDEEEDTP) show a composition bias toward acidic residues.

Belongs to the TRAFAC class translation factor GTPase superfamily. Bms1-like GTPase family. TSR1 subfamily.

It localises to the nucleus. It is found in the nucleolus. Functionally, required during maturation of the 40S ribosomal subunit in the nucleolus. This is Pre-rRNA-processing protein TSR1 homolog from Caenorhabditis briggsae.